The primary structure comprises 933 residues: Isoleucine--tRNA ligase (933 aa).

Positions 57-67 match the 'HIGH' region motif; it reads PYANGNIHVGH. Glutamate 554 contacts L-isoleucyl-5'-AMP. The short motif at 595 to 599 is the 'KMSKS' region element; the sequence is KMSKS. An ATP-binding site is contributed by lysine 598.

This sequence belongs to the class-I aminoacyl-tRNA synthetase family. IleS type 1 subfamily. Monomer.

It localises to the cytoplasm. The catalysed reaction is tRNA(Ile) + L-isoleucine + ATP = L-isoleucyl-tRNA(Ile) + AMP + diphosphate. Functionally, catalyzes the attachment of isoleucine to tRNA(Ile). As IleRS can inadvertently accommodate and process structurally similar amino acids such as valine, to avoid such errors it has two additional distinct tRNA(Ile)-dependent editing activities. One activity is designated as 'pretransfer' editing and involves the hydrolysis of activated Val-AMP. The other activity is designated 'posttransfer' editing and involves deacylation of mischarged Val-tRNA(Ile). The sequence is that of Isoleucine--tRNA ligase from Streptococcus pyogenes serotype M3 (strain ATCC BAA-595 / MGAS315).